The chain runs to 124 residues: Ribonuclease pancreatic (124 aa).

Residues Lys-1–Met-13 show a composition bias toward basic and acidic residues. Residues Lys-1–Asn-24 are disordered. Residues Lys-7 and Arg-10 each contribute to the substrate site. The Proton acceptor role is filled by His-12. Intrachain disulfides connect Cys-26–Cys-84, Cys-40–Cys-95, Cys-58–Cys-110, and Cys-65–Cys-72. N-linked (GlcNAc...) asparagine; partial glycosylation is present at Asn-34. Substrate-binding positions include Lys-41–Thr-45, Lys-66, and Arg-85. His-119 acts as the Proton donor in catalysis.

The protein belongs to the pancreatic ribonuclease family. As to quaternary structure, monomer. Interacts with and forms tight 1:1 complexes with RNH1. Dimerization of two such complexes may occur. Interaction with RNH1 inhibits this protein. Pancreas.

It localises to the secreted. It carries out the reaction an [RNA] containing cytidine + H2O = an [RNA]-3'-cytidine-3'-phosphate + a 5'-hydroxy-ribonucleotide-3'-[RNA].. It catalyses the reaction an [RNA] containing uridine + H2O = an [RNA]-3'-uridine-3'-phosphate + a 5'-hydroxy-ribonucleotide-3'-[RNA].. Its function is as follows. Endonuclease that catalyzes the cleavage of RNA on the 3' side of pyrimidine nucleotides. Acts on single-stranded and double-stranded RNA. The polypeptide is Ribonuclease pancreatic (RNASE1) (Aepyceros melampus (Impala)).